The primary structure comprises 321 residues: Meiotic drive suppressor wtf26 (321 aa).

Residues 29–68 (GLLPEYNSEEEGALPTYSDHARSSNPPNTHRENHSSGTTD) are disordered. The next 6 helical transmembrane spans lie at 73–93 (FLIKLLISFTPIVLLNALAVC), 110–130 (WTLFGFWCLVCTLALIILTYF), 151–171 (EMMIIIWILWLIICCILFGCV), 188–208 (TISAVLFLIVSSVCIPMWTLW), 210–230 (ALSGMLQVLGIHGIIALLVNG), and 243–263 (GYEIEGFVLFFTGNALFLYEM).

Belongs to the WTF family. In terms of assembly, homomer. Interacts with other proteins that exhibit high sequence similarity.

Its subcellular location is the spore membrane. It localises to the vacuole membrane. Functionally, acts as a suppressor component of the dual wtf meiotic drive system, and can suppress but not confer meiotic drive by compatible poisons. Wtf meiotic drive systems promote unequal transmission of alleles from the parental zygote to progeny spores by encoding a poison and an antidote from the same locus; the poison is trans-acting and forms toxic aggregates in all spores within an ascus, wherease the antidote is spore-specific and targets aggregates for degradation by the vacuole. Meiotic drive by wtf systems therefore lead to poisoning of all progeny that do not inherit the dual poison/antidote allele, or express a compatible antidote. This Schizosaccharomyces kambucha (Fission yeast) protein is Meiotic drive suppressor wtf26.